Reading from the N-terminus, the 295-residue chain is Cytidine deaminase (295 aa).

2 consecutive CMP/dCMP-type deaminase domains span residues 48–168 and 187–295; these read EDSD…FGPA and DDDE…YLSL. 89–91 lines the substrate pocket; that stretch reads NME. Histidine 102 serves as a coordination point for Zn(2+). Glutamate 104 functions as the Proton donor in the catalytic mechanism. Residues cysteine 129 and cysteine 132 each contribute to the Zn(2+) site.

Belongs to the cytidine and deoxycytidylate deaminase family. Homodimer. The cofactor is Zn(2+).

It carries out the reaction cytidine + H2O + H(+) = uridine + NH4(+). It catalyses the reaction 2'-deoxycytidine + H2O + H(+) = 2'-deoxyuridine + NH4(+). In terms of biological role, this enzyme scavenges exogenous and endogenous cytidine and 2'-deoxycytidine for UMP synthesis. The sequence is that of Cytidine deaminase from Vibrio cholerae serotype O1 (strain ATCC 39541 / Classical Ogawa 395 / O395).